We begin with the raw amino-acid sequence, 75 residues long: Probable [Fe-S]-dependent transcriptional repressor (75 aa).

Residues Cys55, Cys60, Cys63, and Cys72 each coordinate iron-sulfur cluster.

It belongs to the FeoC family.

May function as a transcriptional regulator that controls feoABC expression. The polypeptide is Probable [Fe-S]-dependent transcriptional repressor (Serratia marcescens).